Reading from the N-terminus, the 189-residue chain is UPF0301 protein PST_3956 (189 aa).

Belongs to the UPF0301 (AlgH) family.

The polypeptide is UPF0301 protein PST_3956 (Stutzerimonas stutzeri (strain A1501) (Pseudomonas stutzeri)).